The chain runs to 223 residues: Sigma non-opioid intracellular receptor 1 (223 aa).

The Lumenal segment spans residues 1 to 7 (MAVLSSR). Residues 8-29 (AMRAALGLAVLAVVIQLLRTWL) traverse the membrane as a helical segment. The Cytoplasmic portion of the chain corresponds to 30-223 (SSKSYLFNQK…HTYLSELGLS (194 aa)). Positions 98 to 105 (SLTEYILL) are important for ligand-binding. The C-terminal hydrophobic region stretch occupies residues 176-223 (FIPSTMGFALADTIFSTQDFCTLFYTFRIYARCLLLETHTYLSELGLS).

It belongs to the ERG2 family. In terms of assembly, homotrimer.

Its subcellular location is the nucleus inner membrane. It is found in the nucleus outer membrane. It localises to the nucleus envelope. The protein resides in the cytoplasmic vesicle. The protein localises to the endoplasmic reticulum membrane. Its subcellular location is the membrane. In terms of biological role, may function in lipid transport from the endoplasmic reticulum and be involved in a wide array of cellular functions probably through regulation of the biogenesis of lipid microdomains at the plasma membrane. May regulate calcium efflux at the endoplasmic reticulum. The polypeptide is Sigma non-opioid intracellular receptor 1 (SIGMAR1) (Taricha granulosa (Roughskin newt)).